The chain runs to 423 residues: MLVHSYSSMERADGLSSSSPGGRLSQLNQAAYSSAPPLCHTPASDFQPPYFPPPYPQSSLSYSQSQDGGYPHLPEPYPSLNSLHQHQQAAWHSQRSRSEDAGLLSQPHRALSLDPRREYPGVPRLLTHGLGDGAAALGDGPLGMHAVHHGLDDIQGLEEASALGILDHSVIKKVPLPSKLNGSTISALSLSKEGLGLGGVSNPAEVFCSVPGRLSLLSSTSKYKVTVGEVQRRLAPPECLNASLLGGVLRRAKSKNGGRCLRERLEKIGLNLPAGRRKAANVTLLTALVEGEAVHLARDFGYVCETEFPARATAEYLCRQTEPDQLPTRRSMLLATKEICKEFVDLMSQDRSPLGASRPTPCLEPGVQSSLTHFSLLTHGFGTPALCAALSAFQSYLLEALKLLDKGENGGKNHHDKELKHRK.

A disordered region spans residues Met-1–His-108. The segment covering Gly-14–Leu-27 has biased composition (low complexity). Residues Tyr-50–Tyr-55 carry the PPxY motif motif. Positions Gln-57–Tyr-70 are enriched in low complexity. Over residues Ser-79 to Ser-93 the composition is skewed to polar residues. Residues Arg-276 to Asp-405 form an H-S-H (helix-span-helix), dimerization region.

Belongs to the AP-2 family. In terms of assembly, binds DNA as a dimer. Can form homodimers or heterodimers with other AP-2 family members.

It localises to the nucleus. Sequence-specific DNA-binding protein that interacts with inducible viral and cellular enhancer elements to regulate transcription of selected genes. AP-2 factors bind to the consensus sequence 5'-GCCNNNGGC-3' and activate genes involved in a large spectrum of important biological functions. This chain is Transcription factor AP-2-epsilon, found in Danio rerio (Zebrafish).